The sequence spans 528 residues: Arginine--tRNA ligase (528 aa).

A 'HIGH' region motif is present at residues Ala-112 to His-122.

Belongs to the class-I aminoacyl-tRNA synthetase family. Monomer.

Its subcellular location is the cytoplasm. The catalysed reaction is tRNA(Arg) + L-arginine + ATP = L-arginyl-tRNA(Arg) + AMP + diphosphate. In Wolinella succinogenes (strain ATCC 29543 / DSM 1740 / CCUG 13145 / JCM 31913 / LMG 7466 / NCTC 11488 / FDC 602W) (Vibrio succinogenes), this protein is Arginine--tRNA ligase.